The following is a 361-amino-acid chain: MTPTLRRKLQALAERREELQHLLSDPDVVGNNDTFRTLSRELSQLEPVAVALEEEARAKADLATAEALRNDPEMRELAEEEIAAAQARLEQLDAQLASLLVPRDPRDDGNLFLEVRAGTGGDEAAIFAGDLFRMYARYAERQGWKVEIESDSPGEHGGYKEVVARVVGRGAYSRLKFESGTHRVQRVPATESQGRIHTSAATVAIIPEADDVEEITINPADLKVDTFRSSGAGGQHVNKTESAIRITHVPSGVVVECQTERSQHANRDKAMKRLKAQLLDTERSKAAAAEAQTRKLQVGSGDRSQRIRTYSFPQGRITDHRVEGLTLYDLPNIIEGDLDALIGRLLHEHQADELARLSDSP.

Glutamine 235 bears the N5-methylglutamine mark. Residues 288 to 307 (AAEAQTRKLQVGSGDRSQRI) form a disordered region.

The protein belongs to the prokaryotic/mitochondrial release factor family. In terms of processing, methylated by PrmC. Methylation increases the termination efficiency of RF1.

The protein localises to the cytoplasm. Its function is as follows. Peptide chain release factor 1 directs the termination of translation in response to the peptide chain termination codons UAG and UAA. The sequence is that of Peptide chain release factor 1 from Xanthomonas axonopodis pv. citri (strain 306).